Here is a 362-residue protein sequence, read N- to C-terminus: 3-dehydroquinate synthase (362 aa).

Residues aspartate 74–lysine 79, glycine 108–aspartate 112, threonine 132–threonine 133, lysine 145, lysine 154, and threonine 172–threonine 175 contribute to the NAD(+) site. Zn(2+)-binding residues include glutamate 187, histidine 250, and histidine 267.

The protein belongs to the sugar phosphate cyclases superfamily. Dehydroquinate synthase family. Requires Co(2+) as cofactor. The cofactor is Zn(2+). NAD(+) is required as a cofactor.

It is found in the cytoplasm. It carries out the reaction 7-phospho-2-dehydro-3-deoxy-D-arabino-heptonate = 3-dehydroquinate + phosphate. The protein operates within metabolic intermediate biosynthesis; chorismate biosynthesis; chorismate from D-erythrose 4-phosphate and phosphoenolpyruvate: step 2/7. Functionally, catalyzes the conversion of 3-deoxy-D-arabino-heptulosonate 7-phosphate (DAHP) to dehydroquinate (DHQ). The chain is 3-dehydroquinate synthase from Citrifermentans bemidjiense (strain ATCC BAA-1014 / DSM 16622 / JCM 12645 / Bem) (Geobacter bemidjiensis).